Consider the following 372-residue polypeptide: Adaptive-response sensory kinase SasA (372 aa).

Residues 147-360 (MVAHELRTPL…CFHFTVPVWQ (214 aa)) form the Histidine kinase domain. His150 carries the post-translational modification Phosphohistidine; by autocatalysis.

In terms of assembly, homooligomerizes. Interacts with KaiC. Participates in the KaiBC complex, whose core is composed of a KaiC homohexamer and 6 KaiB.

The enzyme catalyses ATP + protein L-histidine = ADP + protein N-phospho-L-histidine.. Functionally, member of the two-component regulatory system SasA/RpaA involved in genome-wide circadian gene expression. One of several clock output pathways. Participates in the Kai clock protein complex, the main circadian regulator in cyanobacteria, via its interaction with KaiC. KaiC enhances the autophosphorylation activity of SasA, which then transfers its phosphate group to RpaA to activate it. In addition to its output function, recruits fold-shifted KaiB (KaiB(fs)) to KaiC to cooperatively form the KaiB(6):KaiC(6) complex (independent of SasA kinase activity). Required for robustness of the circadian rhythm of gene expression and is involved in clock output, also required for adaptation to light/dark cycles. The chain is Adaptive-response sensory kinase SasA from Prochlorococcus marinus (strain MIT 9215).